The primary structure comprises 179 residues: Large ribosomal subunit protein uL5 (179 aa).

This sequence belongs to the universal ribosomal protein uL5 family. As to quaternary structure, part of the 50S ribosomal subunit; part of the 5S rRNA/L5/L18/L25 subcomplex. Contacts the 5S rRNA and the P site tRNA. Forms a bridge to the 30S subunit in the 70S ribosome.

In terms of biological role, this is one of the proteins that bind and probably mediate the attachment of the 5S RNA into the large ribosomal subunit, where it forms part of the central protuberance. In the 70S ribosome it contacts protein S13 of the 30S subunit (bridge B1b), connecting the 2 subunits; this bridge is implicated in subunit movement. Contacts the P site tRNA; the 5S rRNA and some of its associated proteins might help stabilize positioning of ribosome-bound tRNAs. The protein is Large ribosomal subunit protein uL5 of Pseudomonas fluorescens (strain SBW25).